The chain runs to 237 residues: Ribonuclease PH (237 aa).

Phosphate-binding positions include R86 and 124 to 126 (GTR).

The protein belongs to the RNase PH family. As to quaternary structure, homohexameric ring arranged as a trimer of dimers.

It carries out the reaction tRNA(n+1) + phosphate = tRNA(n) + a ribonucleoside 5'-diphosphate. Its function is as follows. Phosphorolytic 3'-5' exoribonuclease that plays an important role in tRNA 3'-end maturation. Removes nucleotide residues following the 3'-CCA terminus of tRNAs; can also add nucleotides to the ends of RNA molecules by using nucleoside diphosphates as substrates, but this may not be physiologically important. Probably plays a role in initiation of 16S rRNA degradation (leading to ribosome degradation) during starvation. This is Ribonuclease PH from Methylobacterium radiotolerans (strain ATCC 27329 / DSM 1819 / JCM 2831 / NBRC 15690 / NCIMB 10815 / 0-1).